We begin with the raw amino-acid sequence, 1159 residues long: RAD51-associated protein 2 (1159 aa).

A disordered region spans residues 1–35 (MSLPQPTPRMAELRKPTSSLTPPEDPDSQPPSSKR). Residues 1111–1159 (SHFPHGISRVRPLKTCSRPIRIGLSRKARIKQLHPYLKQMCYGNLKENF) form an interaction with RAD51 region.

Interacts with RAD51. Specifically expressed in meiotic tissues. Highly expressed in testis.

The protein is RAD51-associated protein 2 (RAD51AP2) of Homo sapiens (Human).